Here is an 80-residue protein sequence, read N- to C-terminus: Defensin-like protein 18 (80 aa).

An N-terminal signal peptide occupies residues 1–29; that stretch reads MAKFCTTITLILVALVLFADFEAPTIVKA. Cystine bridges form between Cys-32–Cys-80, Cys-43–Cys-64, Cys-49–Cys-74, and Cys-53–Cys-76.

Belongs to the DEFL family.

It localises to the secreted. Functionally, confers broad-spectrum resistance to pathogens. This Arabidopsis thaliana (Mouse-ear cress) protein is Defensin-like protein 18 (PDF1.5).